The chain runs to 511 residues: GATOR complex protein NPRL3 (511 aa).

The segment at 37-58 is disordered; the sequence is KPATKAPSKDPQPSSSNPGQCV.

This sequence belongs to the NPR3 family. Probably part of the GATOR complex.

It is found in the lysosome membrane. Its function is as follows. As a component of the GATOR complex may function in the amino acid-sensing branch of the TORC1 signaling pathway. This is GATOR complex protein NPRL3 (nprl-3) from Caenorhabditis elegans.